The primary structure comprises 263 residues: Shikimate dehydrogenase (NADP(+)) (263 aa).

Shikimate is bound by residues 16–18 and threonine 65; that span reads SKS. The active-site Proton acceptor is the lysine 69. Asparagine 90 and aspartate 105 together coordinate shikimate. Residues 125–129 and leucine 208 contribute to the NADP(+) site; that span reads GSGGS. Tyrosine 210 is a binding site for shikimate. Glycine 230 lines the NADP(+) pocket.

This sequence belongs to the shikimate dehydrogenase family. As to quaternary structure, homodimer.

The catalysed reaction is shikimate + NADP(+) = 3-dehydroshikimate + NADPH + H(+). It participates in metabolic intermediate biosynthesis; chorismate biosynthesis; chorismate from D-erythrose 4-phosphate and phosphoenolpyruvate: step 4/7. With respect to regulation, inhibited by curcumin, 3-(2-naphthyloxy)-4-oxo-2-(trifluoromethyl)-4H-chromen-7-yl 3-chlorobenzoate, butyl 2-{[3-(2-naphthyloxy)-4-oxo-2-(trifluoromethyl)-4H-chromen-7-yl]oxy}propanoate, 2-({2-[(2-{[2-(2,3-dimethylanilino)-2-oxoethyl]sulfanyl}-1,3-benzothiazol-6-yl)amino]-2-oxoethyl}sulfanyl)-N-(2-naphthyl)acetamide, and maesaquinone diacetate. Its function is as follows. Involved in the biosynthesis of the chorismate, which leads to the biosynthesis of aromatic amino acids. Catalyzes the reversible NADPH linked reduction of 3-dehydroshikimate (DHSA) to yield shikimate (SA). It can also use NAD to oxidize shikimate. This chain is Shikimate dehydrogenase (NADP(+)), found in Helicobacter pylori (Campylobacter pylori).